The sequence spans 880 residues: Alanine--tRNA ligase (880 aa).

Positions 568, 572, 670, and 674 each coordinate Zn(2+).

The protein belongs to the class-II aminoacyl-tRNA synthetase family. Requires Zn(2+) as cofactor.

The protein localises to the cytoplasm. The enzyme catalyses tRNA(Ala) + L-alanine + ATP = L-alanyl-tRNA(Ala) + AMP + diphosphate. Functionally, catalyzes the attachment of alanine to tRNA(Ala) in a two-step reaction: alanine is first activated by ATP to form Ala-AMP and then transferred to the acceptor end of tRNA(Ala). Also edits incorrectly charged Ser-tRNA(Ala) and Gly-tRNA(Ala) via its editing domain. This is Alanine--tRNA ligase from Ligilactobacillus salivarius (strain UCC118) (Lactobacillus salivarius).